A 221-amino-acid chain; its full sequence is Probable N-acetyl-alpha-D-glucosaminyl L-malate deacetylase 2 (221 aa).

3 residues coordinate Zn(2+): histidine 11, aspartate 14, and histidine 125.

It belongs to the PIGL family. Requires Zn(2+) as cofactor.

It carries out the reaction (S)-malyl N-acetyl-alpha-D-glucosaminide + H2O = (S)-malyl alpha-D-glucosaminide + acetate. Its function is as follows. Involved in bacillithiol (BSH) biosynthesis. Catalyzes the second step of the pathway, the deacetylation of N-acetylglucosaminylmalate (GlcNAc-Mal) to glucosamine malate (GlcN-Mal). The protein is Probable N-acetyl-alpha-D-glucosaminyl L-malate deacetylase 2 of Bacillus subtilis (strain 168).